The chain runs to 79 residues: Acyl carrier protein (79 aa).

Residues 2 to 77 form the Carrier domain; sequence STIEERVKKI…QAIDYVKAHV (76 aa). At serine 37 the chain carries O-(pantetheine 4'-phosphoryl)serine.

Belongs to the acyl carrier protein (ACP) family. Post-translationally, 4'-phosphopantetheine is transferred from CoA to a specific serine of apo-ACP by AcpS. This modification is essential for activity because fatty acids are bound in thioester linkage to the sulfhydryl of the prosthetic group.

It is found in the cytoplasm. The protein operates within lipid metabolism; fatty acid biosynthesis. In terms of biological role, carrier of the growing fatty acid chain in fatty acid biosynthesis. In Xanthomonas axonopodis pv. citri (strain 306), this protein is Acyl carrier protein.